Here is a 97-residue protein sequence, read N- to C-terminus: Acylphosphatase (97 aa).

The Acylphosphatase-like domain occupies 3-97 (KVKMIVSGRV…PDFTDFNIKY (95 aa)). Residues Arg18 and Asn36 contribute to the active site.

Belongs to the acylphosphatase family.

The catalysed reaction is an acyl phosphate + H2O = a carboxylate + phosphate + H(+). In Lactococcus lactis subsp. lactis (strain IL1403) (Streptococcus lactis), this protein is Acylphosphatase (acyP).